We begin with the raw amino-acid sequence, 236 residues long: Uridylate kinase (236 aa).

10-11 (GS) contributes to the ATP binding site. A UMP-binding site is contributed by Gly-44. The ATP site is built by Gly-45 and Arg-49. UMP contacts are provided by residues Asp-66 and 114-120 (ITPGQTT). Thr-140, Tyr-146, and Asp-149 together coordinate ATP.

This sequence belongs to the UMP kinase family. In terms of assembly, homohexamer.

The protein resides in the cytoplasm. The catalysed reaction is UMP + ATP = UDP + ADP. Its pathway is pyrimidine metabolism; CTP biosynthesis via de novo pathway; UDP from UMP (UMPK route): step 1/1. With respect to regulation, inhibited by UTP. Its function is as follows. Catalyzes the reversible phosphorylation of UMP to UDP. The sequence is that of Uridylate kinase from Methanospirillum hungatei JF-1 (strain ATCC 27890 / DSM 864 / NBRC 100397 / JF-1).